The primary structure comprises 464 residues: Kynureninase 2 (464 aa).

Residues Leu-135, Thr-136, 163–166 (FPSD), Asp-248, His-251, and Tyr-273 each bind pyridoxal 5'-phosphate. Residue Lys-274 is modified to N6-(pyridoxal phosphate)lysine. Pyridoxal 5'-phosphate is bound by residues Trp-313 and Asn-341.

The protein belongs to the kynureninase family. As to quaternary structure, homodimer. The cofactor is pyridoxal 5'-phosphate.

It is found in the cytoplasm. It catalyses the reaction L-kynurenine + H2O = anthranilate + L-alanine + H(+). It carries out the reaction 3-hydroxy-L-kynurenine + H2O = 3-hydroxyanthranilate + L-alanine + H(+). Its pathway is amino-acid degradation; L-kynurenine degradation; L-alanine and anthranilate from L-kynurenine: step 1/1. It functions in the pathway cofactor biosynthesis; NAD(+) biosynthesis; quinolinate from L-kynurenine: step 2/3. Its function is as follows. Catalyzes the cleavage of L-kynurenine (L-Kyn) and L-3-hydroxykynurenine (L-3OHKyn) into anthranilic acid (AA) and 3-hydroxyanthranilic acid (3-OHAA), respectively. This Aspergillus fumigatus (strain CBS 144.89 / FGSC A1163 / CEA10) (Neosartorya fumigata) protein is Kynureninase 2 (bna5-2).